A 341-amino-acid polypeptide reads, in one-letter code: Glycerol-3-phosphate dehydrogenase [NAD(P)+] (341 aa).

NADPH is bound by residues Ser14, Phe15, Arg35, and Lys108. The sn-glycerol 3-phosphate site is built by Lys108 and Gly136. Ala140 provides a ligand contact to NADPH. Residues Lys191, Asp244, Ser254, Arg255, and Asn256 each coordinate sn-glycerol 3-phosphate. Lys191 acts as the Proton acceptor in catalysis. Residue Arg255 coordinates NADPH. NADPH-binding residues include Val279 and Glu281.

Belongs to the NAD-dependent glycerol-3-phosphate dehydrogenase family.

It localises to the cytoplasm. It catalyses the reaction sn-glycerol 3-phosphate + NAD(+) = dihydroxyacetone phosphate + NADH + H(+). It carries out the reaction sn-glycerol 3-phosphate + NADP(+) = dihydroxyacetone phosphate + NADPH + H(+). It functions in the pathway membrane lipid metabolism; glycerophospholipid metabolism. Its function is as follows. Catalyzes the reduction of the glycolytic intermediate dihydroxyacetone phosphate (DHAP) to sn-glycerol 3-phosphate (G3P), the key precursor for phospholipid synthesis. This chain is Glycerol-3-phosphate dehydrogenase [NAD(P)+], found in Pseudomonas fluorescens (strain SBW25).